Reading from the N-terminus, the 420-residue chain is Serine palmitoyltransferase (420 aa).

A compositionally biased stretch (polar residues) spans 1-21; it reads MKHNLQDNLQGEQMANTNSNG. Residues 1–25 are disordered; sequence MKHNLQDNLQGEQMANTNSNGGKKP. Pyridoxal 5'-phosphate is bound by residues 132–133, His-233, Thr-261, and Ser-263; that span reads GM. Lys-264 bears the N6-(pyridoxal phosphate)lysine mark.

This sequence belongs to the class-II pyridoxal-phosphate-dependent aminotransferase family. Homodimer. The cofactor is pyridoxal 5'-phosphate.

Its subcellular location is the cytoplasm. It is found in the cell inner membrane. The catalysed reaction is L-serine + hexadecanoyl-CoA + H(+) = 3-oxosphinganine + CO2 + CoA. It functions in the pathway lipid metabolism; sphingolipid metabolism. Its activity is regulated as follows. Significantly inhibited by palmitoyl-CoA concentrations greater than 100 uM. Catalyzes the condensation of L-serine with palmitoyl-CoA (hexadecanoyl-CoA) to produce 3-oxosphinganine. The sequence is that of Serine palmitoyltransferase from Bacteriovorax stolpii (Bdellovibrio stolpii).